The chain runs to 150 residues: Arginine repressor (150 aa).

It belongs to the ArgR family.

The protein localises to the cytoplasm. The protein operates within amino-acid biosynthesis; L-arginine biosynthesis [regulation]. Its function is as follows. Regulates arginine biosynthesis genes. The protein is Arginine repressor of Thermoanaerobacter sp. (strain X514).